Reading from the N-terminus, the 67-residue chain is uncharacterized protein (67 aa).

This is an uncharacterized protein from Lymantria dispar multicapsid nuclear polyhedrosis virus (LdMNPV).